The chain runs to 363 residues: Glutamate 5-kinase (363 aa).

Lys-3 contacts ATP. Residues Ser-43, Asp-128, and Asn-140 each coordinate substrate. Residues 160–161 (TD) and 202–208 (TGGMRTK) contribute to the ATP site. The region spanning 267 to 349 (AGAILIDDGA…REIENVLGYS (83 aa)) is the PUA domain.

It belongs to the glutamate 5-kinase family.

It localises to the cytoplasm. The enzyme catalyses L-glutamate + ATP = L-glutamyl 5-phosphate + ADP. It participates in amino-acid biosynthesis; L-proline biosynthesis; L-glutamate 5-semialdehyde from L-glutamate: step 1/2. In terms of biological role, catalyzes the transfer of a phosphate group to glutamate to form L-glutamate 5-phosphate. The polypeptide is Glutamate 5-kinase (Xanthomonas axonopodis pv. citri (strain 306)).